A 206-amino-acid chain; its full sequence is Putative NAD(P)H nitroreductase MhqN (206 aa).

FMN contacts are provided by residues 11 to 13, 68 to 70, 157 to 158, Arg193, and Arg196; these read RRS, QYK, and IG.

Belongs to the nitroreductase family. As to quaternary structure, homodimer. FMN is required as a cofactor.

The protein localises to the cytoplasm. Functionally, putative nitroreductase that may contribute to the degradation of aromatic compounds. This chain is Putative NAD(P)H nitroreductase MhqN (mhqN), found in Bacillus subtilis (strain 168).